Consider the following 186-residue polypeptide: Probable GTP-binding protein EngB (186 aa).

Residues 18–186 (SKKEVCLIGR…LMLKIIDVIS (169 aa)) form the EngB-type G domain. GTP contacts are provided by residues 26–33 (GRSNVGKS), 52–56 (GRTVT), 69–72 (DLPG), 135–138 (NKID), and 166–168 (ISA). Positions 33 and 54 each coordinate Mg(2+).

The protein belongs to the TRAFAC class TrmE-Era-EngA-EngB-Septin-like GTPase superfamily. EngB GTPase family. Requires Mg(2+) as cofactor.

In terms of biological role, necessary for normal cell division and for the maintenance of normal septation. The sequence is that of Probable GTP-binding protein EngB from Mycoplasmoides gallisepticum (strain R(low / passage 15 / clone 2)) (Mycoplasma gallisepticum).